Consider the following 546-residue polypeptide: Chaperonin GroEL 4 (546 aa).

Residues 30–33 (TLGP), lysine 51, 87–91 (DGTTT), glycine 415, and aspartate 496 each bind ATP.

Belongs to the chaperonin (HSP60) family. Forms a cylinder of 14 subunits composed of two heptameric rings stacked back-to-back. Interacts with the co-chaperonin GroES.

It is found in the cytoplasm. It catalyses the reaction ATP + H2O + a folded polypeptide = ADP + phosphate + an unfolded polypeptide.. Its function is as follows. Together with its co-chaperonin GroES, plays an essential role in assisting protein folding. The GroEL-GroES system forms a nano-cage that allows encapsulation of the non-native substrate proteins and provides a physical environment optimized to promote and accelerate protein folding. The polypeptide is Chaperonin GroEL 4 (Bradyrhizobium sp. (strain BTAi1 / ATCC BAA-1182)).